The chain runs to 253 residues: Probable transcriptional regulatory protein AM1_1847 (253 aa).

Belongs to the TACO1 family.

It is found in the cytoplasm. In Acaryochloris marina (strain MBIC 11017), this protein is Probable transcriptional regulatory protein AM1_1847.